We begin with the raw amino-acid sequence, 328 residues long: Arylacetonitrilase (328 aa).

The CN hydrolase domain maps to 5–278 (VRVAVTQAEP…EGIIYADLDF (274 aa)). Glutamate 45 functions as the Proton acceptor in the catalytic mechanism. Residue lysine 125 is part of the active site. The Nucleophile role is filled by cysteine 160.

This sequence belongs to the carbon-nitrogen hydrolase superfamily. Nitrilase family.

The enzyme catalyses a nitrile + 2 H2O = a carboxylate + NH4(+). It catalyses the reaction 4-chlorophenylacetonitrile + 2 H2O = 4-chlorophenylacetate + NH4(+). Nitrilase that hydrolyzes preferentially phenylacetonitrile, (R,S)-mandelonitrile, and 3-indolylacetonitrile. The sequence is that of Arylacetonitrilase from Aspergillus niger (strain ATCC MYA-4892 / CBS 513.88 / FGSC A1513).